Here is a 305-residue protein sequence, read N- to C-terminus: UDP-3-O-acyl-N-acetylglucosamine deacetylase (305 aa).

Zn(2+) contacts are provided by His78, His237, and Asp241. His264 functions as the Proton donor in the catalytic mechanism.

This sequence belongs to the LpxC family. Zn(2+) serves as cofactor.

It catalyses the reaction a UDP-3-O-[(3R)-3-hydroxyacyl]-N-acetyl-alpha-D-glucosamine + H2O = a UDP-3-O-[(3R)-3-hydroxyacyl]-alpha-D-glucosamine + acetate. Its pathway is glycolipid biosynthesis; lipid IV(A) biosynthesis; lipid IV(A) from (3R)-3-hydroxytetradecanoyl-[acyl-carrier-protein] and UDP-N-acetyl-alpha-D-glucosamine: step 2/6. In terms of biological role, catalyzes the hydrolysis of UDP-3-O-myristoyl-N-acetylglucosamine to form UDP-3-O-myristoylglucosamine and acetate, the committed step in lipid A biosynthesis. In Burkholderia cenocepacia (strain HI2424), this protein is UDP-3-O-acyl-N-acetylglucosamine deacetylase.